The sequence spans 1665 residues: Protein scribble homolog (1665 aa).

Residues 1–804 (MLKCIPLWRC…MRVWRERMVE (804 aa)) are sufficient for targeting to adherens junction and to inhibit cell proliferation. Position 37 is a phosphoserine (S37). LRR repeat units lie at residues 37 to 58 (SLEELLLDANQLRELPKPFFRL), 60 to 81 (NLRKLGLSDNEIQRLPPEVANF), 83 to 104 (QLVELDVSRNDIPEIPESIKFC), 106 to 127 (ALEIADFSGNPLSRLPDGFTQL), 129 to 150 (SLAHLALNDVSLQALPGDVGNL), 152 to 174 (NLVTLELRENLLKSLPASLSFLV), 175 to 197 (KLEQLDLGGNDLEVLPDTLGALP), 198 to 219 (NLRELWLDRNQLSALPPELGNL), 221 to 243 (RLVCLDVSENRLEELPVELGGLA), 244 to 265 (LLTDLLLSQNLLQRLPEGIGQL), 267 to 288 (QLSILKVDQNRLCEVTEAIGDC), 290 to 312 (NLSELILTENLLTALPHSLGKLT), 313 to 334 (KLTNLNVDRNHLEVLPPEIGGC), 336 to 357 (ALSVLSLRDNRLAVLPPELAHT), 359 to 381 (ELHVLDVAGNRLRSLPFALTHLN), and 382 to 402 (LKALWLAENQAQPMLRFQTED). Position 378 is a phosphothreonine (T378). 2 disordered regions span residues 422 to 615 (PSLE…HFKI) and 635 to 689 (REGP…SAPS). The segment covering 428–437 (GQQSSPSESC) has biased composition (polar residues). Positions 452–463 (DTLEGEEDAEEA) are enriched in acidic residues. Residues 455–475 (EGEEDAEEAAAEKRGLQRRAT) are a coiled coil. T475 bears the Phosphothreonine mark. Composition is skewed to basic and acidic residues over residues 479–494 (SELKVMKRGIEERRNE) and 570–580 (FAEDTLIPRED). S583 carries the phosphoserine modification. The stretch at 653-687 (RAHEEEEEEEEENRDEEEGEATTEEDDKEEAVASA) forms a coiled coil. The span at 657–681 (EEEEEEEENRDEEEGEATTEEDDKE) shows a compositional bias: acidic residues. Residues T674 and T675 each carry the phosphothreonine modification. 2 positions are modified to phosphoserine: S694 and S750. An interaction with ARHGEF7 region spans residues 703–1215 (IEPARIEEEE…SLESISSIDR (513 aa)). Residues 714-801 (TLTIVRQTGG…AVQMRVWRER (88 aa)) form the PDZ 1 domain. Residues 714-1180 (TLTIVRQTGG…TVLVCDGFDT (467 aa)) form a required for interaction with VIM region. T812 carries the phosphothreonine modification. A phosphoserine mark is found at S821, S861, and S925. PDZ domains lie at 848 to 936 (AACL…ERET), 990 to 1079 (EICL…RRDP), and 1086 to 1180 (ELCI…GFDT). A phosphoserine mark is found at S1126, S1206, S1209, S1212, S1218, S1262, S1265, and S1284. The span at 1213 to 1228 (IDRELSPEGPGKEKEL) shows a compositional bias: basic and acidic residues. The disordered stretch occupies residues 1213 to 1246 (IDRELSPEGPGKEKELASQALPWESESAETTGRN). Disordered stretches follow at residues 1263-1325 (AGSL…DELP) and 1341-1501 (VHPP…AERR). Over residues 1264-1277 (GSLQRGPSATTGGK) the composition is skewed to polar residues. At K1291 the chain carries Omega-N-methylarginine. Position 1299 is a phosphoserine (A1299). Position 1312 is an omega-N-methylarginine (R1312). Residue S1320 is modified to Phosphoserine. The residue at position 1353 (T1353) is a Phosphothreonine. S1359 carries the phosphoserine modification. Residues 1364–1376 (SFRERQKYFELEV) show a composition bias toward basic and acidic residues. S1389 carries the phosphoserine modification. Residues 1390-1421 (LVGADDLRKMQEEEARKLQQKRAQMLREEAVT) are a coiled coil. Positions 1394 to 1406 (DDLRKMQEEEARK) are enriched in basic and acidic residues. Phosphoserine occurs at positions 1455 and 1458. Basic and acidic residues predominate over residues 1471 to 1482 (AKAERRHQERLR). Phosphoserine is present on residues S1485, S1496, and S1518. A disordered region spans residues 1530-1577 (LSKSQEGRGKRGPLERLAEAPSPAPTPSPTPLEDFGLQTSASPGRLPL). A compositionally biased stretch (basic and acidic residues) spans 1534–1547 (QEGRGKRGPLERLA). Position 1551 is a phosphoserine (S1551). Position 1555 is a phosphothreonine (T1555). A phosphoserine mark is found at S1557, S1571, and S1601. Positions 1632–1665 (GRPSPGAVGPEDMTLCSSRRSVRPGRRGLGPVPS) are disordered.

It belongs to the LAP (LRR and PDZ) protein family. Interacts with UBE3A. Interacts with PAK1 and PAK2. Interacts (via PDZ domains) with VANGL2. Interacts (via PDZ domains) with LPP and TRIP6; the interaction is direct. Interacts (via PDZ domains) with TJP2. Interacts (via PDZ domains) with APC; may mediate APC targeting to adherens junctions of epithelial cells. Interacts (via PDZ domains) with TSHR; regulates TSHR trafficking and function. Interacts with ARHGEF7 and GIT1; interacts directly with ARHGEF7. Interacts with CTNNB1. Interacts with MAPK12. Interacts (via PDZ domains 1 and 3) with MCC. Interacts with DLG5. Interacts with STK4/MST1 and LATS1 in the presence of DLG5. Interacts (via PDZ domain 3) with CRTAM (via PDZ-binding motif); the interaction promotes CRTAM and SCRIB polarization in a subset of CD4+ T-cells. Interacts with YES1, when YES1 is in a closed conformation; the interaction facilitates YES1 autophosphorylation. Interacts (via PDZ domains) with VIM; the interaction protects SCRIB from proteasomal degradation and facilitates SCRIB localization to intermediate filaments, the interaction is reduced by cell contact inhibition. In terms of processing, ubiquitinated; targeted for UBE3A-dependent multiubiquitination and degraded. Post-translationally, palmitoylated. Could be depalmitoylated by LYPLA1 and/or LYPLA2. Palmitoylation of SCRIB by ZDHHC7 is required for its localization to cell-cell junctions, function in the establishement of epithelial cell polarity and the regulation of downstream signaling pathways important for epithelial cell differentiation. In terms of tissue distribution, expressed in CD4+ T-cells (at protein level). Found in a wide range of tissues including liver, kidney and spleen. Also expressed in the brain (at protein level).

It localises to the cell membrane. The protein resides in the cell junction. Its subcellular location is the adherens junction. It is found in the cell projection. The protein localises to the lamellipodium. It localises to the cytoplasm. The protein resides in the postsynapse. Its subcellular location is the presynapse. Scaffold protein involved in different aspects of polarized cell differentiation regulating epithelial and neuronal morphogenesis and T-cell polarization. Via its interaction with CRTAM, required for the late phase polarization of a subset of CD4+ T-cells, which in turn regulates TCR-mediated proliferation and IFNG and IL22 production. Plays a role in cell directional movement, cell orientation, cell sheet organization and Golgi complex polarization at the cell migration front. Promotes epithelial cell layer barrier function via maintaining cell-cell adhesion. Most probably functions in the establishment of apico-basal cell polarity. May function in cell proliferation regulating progression from G1 to S phase and as a positive regulator of apoptosis for instance during acinar morphogenesis of the mammary epithelium. May regulate cell invasion via MAPK-mediated cell migration and adhesion. May play a role in exocytosis and in the targeting of synaptic vesicles to synapses. Functions as an activator of Rac GTPase activity. The polypeptide is Protein scribble homolog (Mus musculus (Mouse)).